A 353-amino-acid polypeptide reads, in one-letter code: Peroxisome assembly protein 12-B (353 aa).

The Peroxisomal matrix portion of the chain corresponds to 1–19 (MAERGAHITTTSPLDDRPS). A helical membrane pass occupies residues 20 to 47 (IFEVVAQESLMAAARPALHHIVKVLAES). Residues 48–51 (NPAR) are Cytoplasmic-facing. A helical membrane pass occupies residues 52-76 (YGTLWRWFDELYTLLECLLQQHYLS). The Peroxisomal matrix portion of the chain corresponds to 77–104 (WASASFSENFYGLKRVTLGKQVGQRNLA). A helical transmembrane segment spans residues 105–134 (RKEYWKSLLLLVLIPYLRIKLEKLVNSLRE). Residues 135 to 139 (EEDYS) lie on the Cytoplasmic side of the membrane. A helical membrane pass occupies residues 140 to 178 (IQNPTSFHKRCYKAILASYPFLKLGWEAWFLFYQLRYIL). Topologically, residues 179 to 243 (WNGKHHSPLL…LGAVTLSVSS (65 aa)) are peroxisomal matrix. Residues 244 to 271 (SLSLGVFFLQFLDWWYSAENRETLKSLG) form a helical membrane-spanning segment. The Cytoplasmic segment spans residues 272–353 (NLPVPPPPIH…HLIKLYTPDG (82 aa)). Zn(2+) contacts are provided by Cys-298, Cys-301, Cys-319, and Cys-322. The segment at 298–337 (CPLCRKVRVNDTALGTSGYVFCYRCAYYYVKTHQRCPVSG) adopts an RING-type; degenerate zinc-finger fold.

Belongs to the pex2/pex10/pex12 family. Component of the PEX2-PEX10-PEX12 retrotranslocation channel.

The protein resides in the peroxisome membrane. Its pathway is protein modification; protein ubiquitination. Component of a retrotranslocation channel required for peroxisome organization by mediating export of the PEX5 receptor from peroxisomes to the cytosol, thereby promoting PEX5 recycling. The retrotranslocation channel is composed of PEX2, PEX10 and PEX12; each subunit contributing transmembrane segments that coassemble into an open channel that specifically allows the passage of PEX5 through the peroxisomal membrane. PEX12 also regulates PEX5 recycling by activating the E3 ubiquitin-protein ligase activity of PEX10. When PEX5 recycling is compromised, PEX12 stimulates PEX10-mediated polyubiquitination of PEX5, leading to its subsequent degradation. This chain is Peroxisome assembly protein 12-B, found in Xenopus laevis (African clawed frog).